The sequence spans 175 residues: Bifunctional protein PyrR (175 aa).

The PRPP-binding signature appears at 97–109 (IVLIDDVLFTGRT).

Belongs to the purine/pyrimidine phosphoribosyltransferase family. PyrR subfamily. Homodimer and homohexamer; in equilibrium.

The catalysed reaction is UMP + diphosphate = 5-phospho-alpha-D-ribose 1-diphosphate + uracil. Functionally, regulates transcriptional attenuation of the pyrimidine nucleotide (pyr) operon by binding in a uridine-dependent manner to specific sites on pyr mRNA. This disrupts an antiterminator hairpin in the RNA and favors formation of a downstream transcription terminator, leading to a reduced expression of downstream genes. Its function is as follows. Also displays a weak uracil phosphoribosyltransferase activity which is not physiologically significant. The chain is Bifunctional protein PyrR from Leuconostoc citreum (strain KM20).